Here is a 397-residue protein sequence, read N- to C-terminus: Elongation factor Tu (397 aa).

The tr-type G domain maps to 10 to 206 (KPHCNIGTIG…AVDEYIPQPE (197 aa)). Residues 19–26 (GHIDHGKT) are G1. Position 19–26 (19–26 (GHIDHGKT)) interacts with GTP. A Mg(2+)-binding site is contributed by Thr-26. The tract at residues 62–66 (GITIS) is G2. Positions 83 to 86 (DCPG) are G3. GTP is bound by residues 83–87 (DCPGH) and 138–141 (NKCD). Residues 138-141 (NKCD) form a G4 region. A G5 region spans residues 176 to 178 (SAF).

This sequence belongs to the TRAFAC class translation factor GTPase superfamily. Classic translation factor GTPase family. EF-Tu/EF-1A subfamily. As to quaternary structure, monomer.

The protein localises to the cytoplasm. The catalysed reaction is GTP + H2O = GDP + phosphate + H(+). In terms of biological role, GTP hydrolase that promotes the GTP-dependent binding of aminoacyl-tRNA to the A-site of ribosomes during protein biosynthesis. This is Elongation factor Tu from Cutibacterium acnes (strain DSM 16379 / KPA171202) (Propionibacterium acnes).